The sequence spans 119 residues: Large ribosomal subunit protein bL20c (119 aa).

Belongs to the bacterial ribosomal protein bL20 family.

It localises to the plastid. It is found in the chloroplast. Its function is as follows. Binds directly to 23S ribosomal RNA and is necessary for the in vitro assembly process of the 50S ribosomal subunit. It is not involved in the protein synthesizing functions of that subunit. This is Large ribosomal subunit protein bL20c from Oedogonium cardiacum (Filamentous green alga).